A 324-amino-acid chain; its full sequence is ATP phosphoribosyltransferase regulatory subunit (324 aa).

This sequence belongs to the class-II aminoacyl-tRNA synthetase family. HisZ subfamily. As to quaternary structure, heteromultimer composed of HisG and HisZ subunits.

It is found in the cytoplasm. It functions in the pathway amino-acid biosynthesis; L-histidine biosynthesis; L-histidine from 5-phospho-alpha-D-ribose 1-diphosphate: step 1/9. In terms of biological role, required for the first step of histidine biosynthesis. May allow the feedback regulation of ATP phosphoribosyltransferase activity by histidine. The sequence is that of ATP phosphoribosyltransferase regulatory subunit from Carboxydothermus hydrogenoformans (strain ATCC BAA-161 / DSM 6008 / Z-2901).